Consider the following 335-residue polypeptide: Mycobacterial beta-ketoacyl-[acyl-carrier-protein] synthase III (335 aa).

Residues C122 and H258 contribute to the active site. The interval 259-263 (QANSR) is ACP-binding. The active site involves N289.

Belongs to the thiolase-like superfamily. FabH family. In terms of assembly, homodimer.

The protein localises to the cytoplasm. The enzyme catalyses malonyl-[ACP] + dodecanoyl-CoA + H(+) = 3-oxotetradecanoyl-[ACP] + CO2 + CoA. The protein operates within lipid metabolism; fatty acid biosynthesis. Its pathway is lipid metabolism; mycolic acid biosynthesis. In terms of biological role, catalyzes the condensation reaction of fatty acid synthesis by the addition to an acyl acceptor of two carbons from malonyl-ACP. Catalyzes the first condensation reaction which initiates fatty acid synthesis and may therefore play a role in governing the total rate of fatty acid production. Possesses both acetoacetyl-ACP synthase and acetyl transacylase activities. Its substrate specificity determines the biosynthesis of branched-chain and/or straight-chain of fatty acids. This chain is Mycobacterial beta-ketoacyl-[acyl-carrier-protein] synthase III, found in Mycobacterium ulcerans (strain Agy99).